A 130-amino-acid polypeptide reads, in one-letter code: Small ribosomal subunit protein uS8 (130 aa).

Belongs to the universal ribosomal protein uS8 family. Part of the 30S ribosomal subunit.

Its function is as follows. One of the primary rRNA binding proteins, it binds directly to 16S rRNA central domain where it helps coordinate assembly of the platform of the 30S subunit. This is Small ribosomal subunit protein uS8 from Pyrobaculum neutrophilum (strain DSM 2338 / JCM 9278 / NBRC 100436 / V24Sta) (Thermoproteus neutrophilus).